The sequence spans 659 residues: Exoribonuclease 2 (659 aa).

Residues 189–532 (REDLTHLYFT…HRLIKQVLSN (344 aa)) enclose the RNB domain. Positions 576–658 (NVEFDGEIQD…ETRSVVGDVL (83 aa)) constitute an S1 motif domain.

This sequence belongs to the RNR ribonuclease family. RNase II subfamily.

It is found in the cytoplasm. The enzyme catalyses Exonucleolytic cleavage in the 3'- to 5'-direction to yield nucleoside 5'-phosphates.. Involved in mRNA degradation. Hydrolyzes single-stranded polyribonucleotides processively in the 3' to 5' direction. The protein is Exoribonuclease 2 of Glaesserella parasuis serovar 5 (strain SH0165) (Haemophilus parasuis).